Here is a 212-residue protein sequence, read N- to C-terminus: Floral homeotic protein PMADS 2 (212 aa).

Residues 3–58 form the MADS-box domain; the sequence is RGKIEIKRIENSSNRQVTYSKRRNGIIKKAKEITVLCDAKVSLIIFGNSGKMHEYC. Positions 84 to 170 constitute a K-box domain; the sequence is HENLSNEIDR…QYALHQKEMA (87 aa).

As to expression, predominantly expressed in petals and stamens, less in carpels and sepals.

The protein resides in the nucleus. Transcription factor involved in the genetic control of flower development. The protein is Floral homeotic protein PMADS 2 (PMADS2) of Petunia hybrida (Petunia).